Consider the following 571-residue polypeptide: Proline--tRNA ligase (571 aa).

It belongs to the class-II aminoacyl-tRNA synthetase family. ProS type 1 subfamily. Homodimer.

Its subcellular location is the cytoplasm. The catalysed reaction is tRNA(Pro) + L-proline + ATP = L-prolyl-tRNA(Pro) + AMP + diphosphate. Functionally, catalyzes the attachment of proline to tRNA(Pro) in a two-step reaction: proline is first activated by ATP to form Pro-AMP and then transferred to the acceptor end of tRNA(Pro). As ProRS can inadvertently accommodate and process non-cognate amino acids such as alanine and cysteine, to avoid such errors it has two additional distinct editing activities against alanine. One activity is designated as 'pretransfer' editing and involves the tRNA(Pro)-independent hydrolysis of activated Ala-AMP. The other activity is designated 'posttransfer' editing and involves deacylation of mischarged Ala-tRNA(Pro). The misacylated Cys-tRNA(Pro) is not edited by ProRS. This is Proline--tRNA ligase from Histophilus somni (strain 2336) (Haemophilus somnus).